Here is a 1030-residue protein sequence, read N- to C-terminus: Alpha-L-rhamnosidase (1030 aa).

The segment at 133 to 297 (PSLEGSSWIW…GAGPWGRVAP (165 aa)) is carbohydrate-binding module-67 (CBM67). Residues Asp-179 and Asn-180 each contribute to the Ca(2+) site. Alpha-L-rhamnose-binding positions include 179–180 (DN) and Trp-203. Asn-228 and Pro-233 together coordinate Ca(2+). Residues Asp-630, 634–636 (RDE), Asp-643, and Trp-695 each bind alpha-L-rhamnose. Glu-636 (proton donor) is an active-site residue. Glu-895 acts as the Proton acceptor in catalysis. His-916 lines the alpha-L-rhamnose pocket.

Belongs to the glycosyl hydrolase 78 family.

The enzyme catalyses Hydrolysis of terminal non-reducing alpha-L-rhamnose residues in alpha-L-rhamnosides.. Alpha-L-rhamnosidase which is able to degrade p-nitrophenyl-alpha-L-rhamnopyranoside (PNP-Rha) in vitro. Releases L-rhamnose from citrus flavonoids such as naringin, rutin and hesperidin, and the arabinogalactan-protein (AGP) gum arabic. AGPs are a family of proteoglycans that are localized on the cell surfaces of higher plants. Cleaves both the alpha-1,6 and the alpha-1,2-linked rhamnosyl residues. The chain is Alpha-L-rhamnosidase from Streptomyces avermitilis (strain ATCC 31267 / DSM 46492 / JCM 5070 / NBRC 14893 / NCIMB 12804 / NRRL 8165 / MA-4680).